The primary structure comprises 345 residues: Flap endonuclease 1 (345 aa).

Positions 1–103 (MGIKQLSKLL…KELEKRKERR (103 aa)) are N-domain. Asp-34 is a binding site for Mg(2+). 2 residues coordinate DNA: Arg-47 and Arg-69. Mg(2+) contacts are provided by Asp-85, Glu-157, Glu-159, Asp-178, and Asp-180. Residues 121-252 (LMEMYDKRKT…KKALGLIKKH (132 aa)) form an I-domain region. Glu-157 is a binding site for DNA. DNA-binding residues include Gly-230 and Asp-232. Residue Asp-232 coordinates Mg(2+). The interval 333-341 (TQGRLDCFI) is interaction with PCNA.

The protein belongs to the XPG/RAD2 endonuclease family. FEN1 subfamily. Interacts with PCNA. Three molecules of FEN1 bind to one PCNA trimer with each molecule binding to one PCNA monomer. PCNA stimulates the nuclease activity without altering cleavage specificity. It depends on Mg(2+) as a cofactor. Post-translationally, phosphorylated. Phosphorylation upon DNA damage induces relocalization to the nuclear plasma.

It localises to the nucleus. The protein localises to the nucleolus. The protein resides in the nucleoplasm. Its subcellular location is the mitochondrion. Its function is as follows. Structure-specific nuclease with 5'-flap endonuclease and 5'-3' exonuclease activities involved in DNA replication and repair. During DNA replication, cleaves the 5'-overhanging flap structure that is generated by displacement synthesis when DNA polymerase encounters the 5'-end of a downstream Okazaki fragment. It enters the flap from the 5'-end and then tracks to cleave the flap base, leaving a nick for ligation. Also involved in the long patch base excision repair (LP-BER) pathway, by cleaving within the apurinic/apyrimidinic (AP) site-terminated flap. Acts as a genome stabilization factor that prevents flaps from equilibrating into structures that lead to duplications and deletions. Also possesses 5'-3' exonuclease activity on nicked or gapped double-stranded DNA, and exhibits RNase H activity. Also involved in replication and repair of rDNA and in repairing mitochondrial DNA. This is Flap endonuclease 1 from Encephalitozoon cuniculi (strain GB-M1) (Microsporidian parasite).